Consider the following 78-residue polypeptide: uncharacterized protein (78 aa).

This is an uncharacterized protein from Enterobacteria phage RB51 (Bacteriophage RB51).